We begin with the raw amino-acid sequence, 584 residues long: DNA damage-binding protein 2 (584 aa).

Residues 1–87 (MGPTTRARFV…PVAAAARSGR (87 aa)) form a disordered region. The span at 8–20 (RFVHNRRRRRRRG) shows a compositional bias: basic residues. Acidic residues-rich tracts occupy residues 25 to 35 (PDDDDEEEDQQ) and 45 to 66 (DEGE…DGEA). A CCHC-type zinc finger spans residues 122 to 140 (KPCFLCKMPGGHTTLTCPH). 7 WD repeats span residues 192–232 (FHQR…EKIT), 236–278 (VHSC…SLLN), 288–327 (STWR…RIGD), 333–373 (KKGS…PNSA), 378–418 (AHGR…LESP), 438–481 (EWDP…LAEV), and 484–523 (PDIT…DATE). Positions 351–366 (LLSSGNDHYARIWDTR) match the DWD box motif. Over residues 517–532 (TESDATEERNREKAKE) the composition is skewed to basic and acidic residues. A disordered region spans residues 517-584 (TESDATEERN…TIKGKGKSKV (68 aa)). A compositionally biased stretch (basic residues) spans 562–584 (KKKKKAKKTRFTHTIKGKGKSKV).

It belongs to the WD repeat DDB2/WDR76 family. Component of the UV-DDB complex, which is composed of DDB1 and DDB2. Expressed in proliferating tissues such as shoot apical meristem (SAM), root tips and young leaves. Not detected in mature leaves.

It localises to the nucleus. Required for DNA repair. Binds to DDB1 to form the UV-damaged DNA-binding protein complex (the UV-DDB complex). The UV-DDB complex may recognize UV-induced DNA damage and recruit proteins of the nucleotide excision repair pathway (the NER pathway) to initiate DNA repair. May function as the substrate recognition module for a DCX (DDB1-CUL4-X-box) E3 ubiquitin-protein ligase complex. The chain is DNA damage-binding protein 2 from Oryza sativa subsp. japonica (Rice).